The following is a 528-amino-acid chain: Esterase PE16 (528 aa).

Positions 1–93 (MSFVFAVPEM…AGWYVDAEAA (93 aa)) constitute a PE domain. The linker stretch occupies residues 94-143 (NAALVDTAATGASELGSGGRTALILGSTGTPRPPFDYMQQVYDRYIAPHY). In terms of domain architecture, PE-PPE spans 149–369 (SGLYTPAQFQ…LRAIIELGYD (221 aa)). Serine 199 is an active-site residue. The helical transmembrane segment at 503–523 (IALLVFAAGIPAVAAVAILTG) threads the bilayer.

This sequence belongs to the mycobacterial PE family.

Its subcellular location is the membrane. It catalyses the reaction a hexanoate ester + H2O = an aliphatic alcohol + hexanoate + H(+). The catalysed reaction is an octanoate ester + H2O = an aliphatic alcohol + octanoate + H(+). The enzyme catalyses a butanoate ester + H2O = an aliphatic alcohol + butanoate + H(+). Its activity is regulated as follows. Esterase activity is significantly inhibited by the serine modifier phenylmethylsulfonyl fluoride (PMSF). Esterase that hydrolyzes short to medium chain fatty acid esters with the highest specific activity for p-nitrophenyl caproate (pNPC6). Has lower activity with p-nitrophenyl caprylate (pNPC8) and p-nitrophenyl butyrate (pNPC4). Has weak activity with p-nitrophenyl caprate (pNPC10) and p-nitrophenyl laurate (pNPC12). Does not possess lipolytic activity and cutinase activity. This is Esterase PE16 from Mycobacterium tuberculosis (strain ATCC 25618 / H37Rv).